We begin with the raw amino-acid sequence, 92 residues long: UPF0213 protein M28_Spy1146 (92 aa).

A GIY-YIG domain is found at 4–80; sequence KKAYMYVLEC…KRKTRSQKLA (77 aa).

This sequence belongs to the UPF0213 family.

The sequence is that of UPF0213 protein M28_Spy1146 from Streptococcus pyogenes serotype M28 (strain MGAS6180).